Here is a 37-residue protein sequence, read N- to C-terminus: MVEPLLSGIVLGLIPVTLAGLFVTAYLQYRRGDKLNR.

A helical transmembrane segment spans residues 5-25 (LLSGIVLGLIPVTLAGLFVTA).

The protein belongs to the PetG family. As to quaternary structure, the 4 large subunits of the cytochrome b6-f complex are cytochrome b6, subunit IV (17 kDa polypeptide, PetD), cytochrome f and the Rieske protein, while the 4 small subunits are PetG, PetL, PetM and PetN. The complex functions as a dimer.

Its subcellular location is the plastid. It localises to the chloroplast thylakoid membrane. In terms of biological role, component of the cytochrome b6-f complex, which mediates electron transfer between photosystem II (PSII) and photosystem I (PSI), cyclic electron flow around PSI, and state transitions. PetG is required for either the stability or assembly of the cytochrome b6-f complex. In Chlorokybus atmophyticus (Soil alga), this protein is Cytochrome b6-f complex subunit 5.